Here is a 550-residue protein sequence, read N- to C-terminus: Zinc finger protein squeeze (550 aa).

Low complexity predominate over residues 73–105; sequence QQQQQQQQQEMLQQQQQHQAHQEQQQQQQQQQQ. Residues 73-179 form a disordered region; it reads QQQQQQQQQE…GGGGGDGDQS (107 aa). Residues 106–117 show a composition bias toward basic residues; the sequence is QHHHQQQQHHLK. A compositionally biased stretch (polar residues) spans 141-156; it reads RSPQRPLMSSGSNASS. A compositionally biased stretch (gly residues) spans 164 to 176; that stretch reads SGGGPGGGGGGDG. 5 C2H2-type zinc fingers span residues 182–204, 210–232, 238–262, 268–290, and 299–321; these read YKCASCSKSFANSSYLSQHTRIH, YRCEICQRKFTQLSHLQQHIRTH, YKCRHAGCPKAFSQLSNLQSHSRCH, FKCNSCYKCFADEMTLLEHIPKH, and HICNLCGKSYTQETYLQKHLQKH. The segment at 399–485 is disordered; it reads LQQHQQQQQQ…VPPSHLQQHR (87 aa). Low complexity predominate over residues 400 to 416; it reads QQHQQQQQQQQQDMLQQ. Thr424 is modified (phosphothreonine). Residues Ser428 and Ser430 each carry the phosphoserine modification. Residues 444 to 460 are compositionally biased toward low complexity; it reads QTTPQHHLQQQQQQQQP. Phosphotyrosine is present on residues Tyr494 and Tyr496.

The protein belongs to the krueppel C2H2-type zinc-finger protein family. In terms of assembly, interacts with nab; which acts as a coactivator. Interacts with ap.

It is found in the nucleus. Its function is as follows. Transcription factor involved in neuronal fate specification. First required in embryonic CNS development to define the number of cells that express apterous (ap) in the ap thoracic cluster of interneurons. Later on, it plays a central role in the combinatorial code of transcription factors that specifies the fate of the Tv neuron in the ap cluster by participating in the transcription regulation of FMRFa in Tv cells. Also required for projection neuron dendritic targeting. The sequence is that of Zinc finger protein squeeze (sqz) from Drosophila pseudoobscura pseudoobscura (Fruit fly).